A 284-amino-acid chain; its full sequence is Zinc finger protein ZAT3 (284 aa).

Residues 1–12 (MNNNHSYDDRSF) show a composition bias toward basic and acidic residues. Residues 1–76 (MNNNHSYDDR…KPDPNAPKIT (76 aa)) form a disordered region. A compositionally biased stretch (polar residues) spans 18-37 (PSNTSNPNPNLQFALSSSYD). A compositionally biased stretch (low complexity) spans 47–62 (TVASSSSSSPKSASKP). 3 C2H2-type zinc fingers span residues 77 to 99 (RPCTECGRKFWSWKALFGHMRCH), 162 to 184 (FECGGCKKVFGSHQALGGHRASH), and 222 to 244 (HKCNICFRVFSSGQALGGHMRCH).

As to quaternary structure, interacts (via the EAR motif) with TPL. In terms of tissue distribution, expressed exclusively in pollen.

The protein resides in the nucleus. Its function is as follows. Mediates the regulation of male germ cell division by DUO1. This Arabidopsis thaliana (Mouse-ear cress) protein is Zinc finger protein ZAT3.